A 1353-amino-acid chain; its full sequence is Xanthine dehydrogenase 2 (1353 aa).

A 2Fe-2S ferredoxin-type domain is found at 7-93; sequence MEAIMYVNGV…GMHVISIEGV (87 aa). [2Fe-2S] cluster contacts are provided by cysteine 45, cysteine 50, cysteine 53, cysteine 75, cysteine 115, cysteine 118, cysteine 151, and cysteine 153. The 186-residue stretch at 249–434 folds into the FAD-binding PCMH-type domain; sequence GGNEGITWYR…LSVFLPWTRP (186 aa). FAD contacts are provided by residues 277–284, phenylalanine 357, 367–371, aspartate 380, leucine 424, and lysine 442; these read LLVGNTEV and CIGGN. Positions 788 and 819 each coordinate Mo-molybdopterin. Substrate is bound by residues glutamate 823 and arginine 901. Arginine 933 is a binding site for Mo-molybdopterin. Substrate contacts are provided by phenylalanine 935 and threonine 1031. Residue alanine 1100 coordinates Mo-molybdopterin. Residue glutamate 1289 is the Proton acceptor of the active site.

Belongs to the xanthine dehydrogenase family. Homodimer. The cofactor is [2Fe-2S] cluster. FAD serves as cofactor. Requires Mo-molybdopterin as cofactor. As to expression, expressed in roots, leaves, stems, flowers and siliques.

It carries out the reaction xanthine + NAD(+) + H2O = urate + NADH + H(+). The enzyme catalyses hypoxanthine + NAD(+) + H2O = xanthine + NADH + H(+). In terms of biological role, key enzyme involved in purine catabolism. Catalyzes the oxidation of hypoxanthine to xanthine and the oxidation of xanthine to urate. Regulates the level of ureides and plays a role during plant growth and development and senescence. This is Xanthine dehydrogenase 2 (XDH2) from Arabidopsis thaliana (Mouse-ear cress).